Consider the following 443-residue polypeptide: Protoheme IX farnesyltransferase, mitochondrial (443 aa).

Transmembrane regions (helical) follow at residues 174–194, 235–255, 257–277, 280–300, 309–329, 364–384, and 411–431; these read AAGF…LTSV, LAVS…TLGV, PLTG…YTPL, ISIA…VMGW, AGAF…FNAL, LLVL…FPIM, and LFFC…TCKR.

The protein belongs to the UbiA prenyltransferase family.

The protein resides in the mitochondrion membrane. The enzyme catalyses heme b + (2E,6E)-farnesyl diphosphate + H2O = Fe(II)-heme o + diphosphate. In terms of biological role, converts protoheme IX and farnesyl diphosphate to heme O. This is Protoheme IX farnesyltransferase, mitochondrial (COX10) from Pongo abelii (Sumatran orangutan).